Reading from the N-terminus, the 102-residue chain is Small ribosomal subunit protein uS10 (102 aa).

The protein belongs to the universal ribosomal protein uS10 family. Part of the 30S ribosomal subunit.

In terms of biological role, involved in the binding of tRNA to the ribosomes. The sequence is that of Small ribosomal subunit protein uS10 from Clostridium novyi (strain NT).